Consider the following 107-residue polypeptide: Putative septation protein SpoVG (107 aa).

The segment at 82 to 107 (ETDEVIPDKNAQPSSDSEDNGSEEEA) is disordered. A compositionally biased stretch (acidic residues) spans 97–107 (DSEDNGSEEEA).

This sequence belongs to the SpoVG family.

Could be involved in septation. This Staphylococcus carnosus (strain TM300) protein is Putative septation protein SpoVG.